The chain runs to 413 residues: Putative competence-damage inducible protein (413 aa).

Belongs to the CinA family.

The protein is Putative competence-damage inducible protein of Acetivibrio thermocellus (strain ATCC 27405 / DSM 1237 / JCM 9322 / NBRC 103400 / NCIMB 10682 / NRRL B-4536 / VPI 7372) (Clostridium thermocellum).